The chain runs to 693 residues: Iron-sulfur clusters transporter atm1, mitochondrial (693 aa).

Residues 1–28 (MLERCPWKLISSPRNIPARSFLNSRGTY) constitute a mitochondrion transit peptide. The Mitochondrial matrix portion of the chain corresponds to 29-118 (LVLRKSNILP…PKGKTNLKVR (90 aa)). A helical transmembrane segment spans residues 119–140 (VVSALALLVAAKILNVQVPFYF). Positions 119-409 (VVSALALLVA…LGSVYREMRQ (291 aa)) constitute an ABC transmembrane type-1 domain. Over 141–163 (KSIIDTMNTTLVQEVGALWSTVG) the chain is Mitochondrial intermembrane. Residues 164-187 (AVVLGYGFARIFSTVFQELRNSVF) traverse the membrane as a helical segment. The Mitochondrial matrix portion of the chain corresponds to 188–236 (AIVSQSAIRSVSSNVYQHLLNLDMNFHLSKQTGSITRAMDRGTKGISFI). Residues 237-260 (LSSMVLHIIPITLEIAMVSGILTY) form a helical membrane-spanning segment. Residue Lys261 is a topological domain, mitochondrial intermembrane. The helical transmembrane segment at 262-282 (YGPSFSAIAATTVALYALFTV) threads the bilayer. Residues 283 to 348 (RTTSWRTVFR…ANVKVASSLA (66 aa)) lie on the Mitochondrial matrix side of the membrane. Glutathione contacts are provided by residues 288 to 292 (RTVFR) and 351 to 354 (NSGQ). The chain crosses the membrane as a helical span at residues 349-367 (FLNSGQAIIFSTALTLMMY). Residues 368–382 (MGCRGIVTSNLTVGD) lie on the Mitochondrial intermembrane side of the membrane. A helical transmembrane segment spans residues 383–404 (LVMINQLVFQLSIPLNFLGSVY). Glutathione is bound at residue Gly401. Topologically, residues 405-693 (REMRQAFTDM…FGESNKSGDA (289 aa)) are mitochondrial matrix. One can recognise an ABC transporter domain in the interval 443-679 (IQFDNVHFSY…NSVYTSMWHS (237 aa)). ATP-binding positions include Tyr452 and 476–487 (GASGCGKSTILR).

The protein belongs to the ABC transporter superfamily. ABCB family. Heavy Metal importer (TC 3.A.1.210) subfamily. In terms of assembly, homodimer.

The protein resides in the mitochondrion inner membrane. In terms of biological role, performs an essential function in the generation of cytoplasmic iron-sulfur proteins by mediating the ATP-dependent export of Fe/S cluster precursors synthesized by nfs1 and other mitochondrial proteins. Hydrolyzes ATP. Binds glutathione and may function by transporting a glutathione-conjugated iron-sulfur compound. The sequence is that of Iron-sulfur clusters transporter atm1, mitochondrial from Schizosaccharomyces pombe (strain 972 / ATCC 24843) (Fission yeast).